Consider the following 124-residue polypeptide: Small ribosomal subunit protein uS12 (124 aa).

At D89 the chain carries 3-methylthioaspartic acid. The tract at residues 101–124 (TLDTSGVKDRRQSRSKYGAKAPKE) is disordered.

This sequence belongs to the universal ribosomal protein uS12 family. Part of the 30S ribosomal subunit. Contacts proteins S8 and S17. May interact with IF1 in the 30S initiation complex.

Functionally, with S4 and S5 plays an important role in translational accuracy. Its function is as follows. Interacts with and stabilizes bases of the 16S rRNA that are involved in tRNA selection in the A site and with the mRNA backbone. Located at the interface of the 30S and 50S subunits, it traverses the body of the 30S subunit contacting proteins on the other side and probably holding the rRNA structure together. The combined cluster of proteins S8, S12 and S17 appears to hold together the shoulder and platform of the 30S subunit. In Synechococcus sp. (strain CC9902), this protein is Small ribosomal subunit protein uS12.